Here is a 117-residue protein sequence, read N- to C-terminus: Large ribosomal subunit protein bL19 (117 aa).

This sequence belongs to the bacterial ribosomal protein bL19 family.

This protein is located at the 30S-50S ribosomal subunit interface and may play a role in the structure and function of the aminoacyl-tRNA binding site. This chain is Large ribosomal subunit protein bL19, found in Vibrio vulnificus (strain CMCP6).